The primary structure comprises 119 residues: Large ribosomal subunit protein uL22c (119 aa).

It belongs to the universal ribosomal protein uL22 family. As to quaternary structure, part of the 50S ribosomal subunit.

Its subcellular location is the plastid. It is found in the chloroplast. Functionally, this protein binds specifically to 23S rRNA. Its function is as follows. The globular domain of the protein is located near the polypeptide exit tunnel on the outside of the subunit, while an extended beta-hairpin is found that lines the wall of the exit tunnel in the center of the 70S ribosome. The protein is Large ribosomal subunit protein uL22c (rpl22) of Marchantia polymorpha (Common liverwort).